A 483-amino-acid polypeptide reads, in one-letter code: Glutamyl-tRNA(Gln) amidotransferase subunit A (483 aa).

Catalysis depends on charge relay system residues K77 and S152. S176 serves as the catalytic Acyl-ester intermediate.

The protein belongs to the amidase family. GatA subfamily. Heterotrimer of A, B and C subunits.

The catalysed reaction is L-glutamyl-tRNA(Gln) + L-glutamine + ATP + H2O = L-glutaminyl-tRNA(Gln) + L-glutamate + ADP + phosphate + H(+). Allows the formation of correctly charged Gln-tRNA(Gln) through the transamidation of misacylated Glu-tRNA(Gln) in organisms which lack glutaminyl-tRNA synthetase. The reaction takes place in the presence of glutamine and ATP through an activated gamma-phospho-Glu-tRNA(Gln). The chain is Glutamyl-tRNA(Gln) amidotransferase subunit A from Shouchella clausii (strain KSM-K16) (Alkalihalobacillus clausii).